Here is a 192-residue protein sequence, read N- to C-terminus: Acireductone dioxygenase 2 (192 aa).

The Fe(2+) site is built by H99, H101, E105, and H144. Residues H99, H101, E105, and H144 each coordinate Ni(2+).

It belongs to the acireductone dioxygenase (ARD) family. It depends on Fe(2+) as a cofactor. Requires Ni(2+) as cofactor.

It localises to the cytoplasm. Its subcellular location is the nucleus. The catalysed reaction is 1,2-dihydroxy-5-(methylsulfanyl)pent-1-en-3-one + O2 = 4-methylsulfanyl-2-oxobutanoate + formate + 2 H(+). It carries out the reaction 1,2-dihydroxy-5-(methylsulfanyl)pent-1-en-3-one + O2 = 3-(methylsulfanyl)propanoate + CO + formate + 2 H(+). Its pathway is amino-acid biosynthesis; L-methionine biosynthesis via salvage pathway; L-methionine from S-methyl-5-thio-alpha-D-ribose 1-phosphate: step 5/6. Catalyzes 2 different reactions between oxygen and the acireductone 1,2-dihydroxy-3-keto-5-methylthiopentene (DHK-MTPene) depending upon the metal bound in the active site. Fe-containing acireductone dioxygenase (Fe-ARD) produces formate and 2-keto-4-methylthiobutyrate (KMTB), the alpha-ketoacid precursor of methionine in the methionine recycle pathway. Ni-containing acireductone dioxygenase (Ni-ARD) produces methylthiopropionate, carbon monoxide and formate, and does not lie on the methionine recycle pathway. This Arabidopsis thaliana (Mouse-ear cress) protein is Acireductone dioxygenase 2 (ARD2).